The sequence spans 277 residues: Large ribosomal subunit protein uL2 (277 aa).

A disordered region spans residues 216–277 (RRPHNRGVAM…IIRRRKVGKG (62 aa)).

Belongs to the universal ribosomal protein uL2 family. In terms of assembly, part of the 50S ribosomal subunit. Forms a bridge to the 30S subunit in the 70S ribosome.

Functionally, one of the primary rRNA binding proteins. Required for association of the 30S and 50S subunits to form the 70S ribosome, for tRNA binding and peptide bond formation. It has been suggested to have peptidyltransferase activity; this is somewhat controversial. Makes several contacts with the 16S rRNA in the 70S ribosome. The chain is Large ribosomal subunit protein uL2 from Acidiphilium cryptum (strain JF-5).